The chain runs to 179 residues: MLYHVEMFTIILLFGFSLADYCGSDQVPYGMEVHHSGVVRLMCSKPNCYDKNYSDCPERAESRHGCQKSNQWVGGFEKNIEGDLYTMCCEFEGLEKYAKVRYSDVRIRRGEFFEGEEKENDDGDVVKFDVIKDIRMHKDDEGQAYYNLTVLSFNCESIPDVKPAWYQKSQWPYFQFAKN.

Positions 1–19 are cleaved as a signal peptide; it reads MLYHVEMFTIILLFGFSLA. 2 N-linked (GlcNAc...) asparagine glycosylation sites follow: N52 and N147.

As to expression, expressed in the trinucleate pharyngeal gland cell g1, seam cells and hypodermis.

It localises to the secreted. Functionally, intercellular signal essential for a variety of patterning events during development. The sequence is that of Warthog protein 3 (wrt-3) from Caenorhabditis elegans.